The sequence spans 175 residues: Ribulose bisphosphate carboxylase small subunit, chloroplastic 2 (175 aa).

A chloroplast-targeting transit peptide spans 1–46 (MAPTVMASSATSVAPFQGLKSTAGLPVSRRSTNSGFGNVSNGGRIK).

It belongs to the RuBisCO small chain family. As to quaternary structure, heterohexadecamer of 8 large and 8 small subunits.

It is found in the plastid. The protein resides in the chloroplast. In terms of biological role, ruBisCO catalyzes two reactions: the carboxylation of D-ribulose 1,5-bisphosphate, the primary event in carbon dioxide fixation, as well as the oxidative fragmentation of the pentose substrate. Both reactions occur simultaneously and in competition at the same active site. Although the small subunit is not catalytic it is essential for maximal activity. The polypeptide is Ribulose bisphosphate carboxylase small subunit, chloroplastic 2 (Oryza sativa subsp. japonica (Rice)).